The primary structure comprises 407 residues: Putative cell wall shaping protein YabE (407 aa).

Positions M1–A31 are cleaved as a signal peptide. Residues I206–Q286 form the G5 domain.

Suggested to be involved in cell wall modification. The polypeptide is Putative cell wall shaping protein YabE (yabE) (Bacillus subtilis (strain 168)).